Reading from the N-terminus, the 5142-residue chain is Protein piccolo (5142 aa).

Residues 1–21 (MGNEASLEGEGLPEGLAAAAA) are compositionally biased toward low complexity. Disordered regions lie at residues 1-154 (MGNE…SMMP) and 177-583 (DLIS…PSQG). 3 stretches are compositionally biased toward basic and acidic residues: residues 114–125 (RTTDTFRSEQKL), 136–150 (KESKSRTDLKEEHKS), and 188–202 (ETTKKQKVVQKEQGK). The segment covering 232-244 (QDGTPKSISSQQP) has biased composition (polar residues). Composition is skewed to pro residues over residues 298–317 (LPSPSKPPIQQPTPGKPPAQ) and 352–371 (PVQPPGTTKPPAQPLGPAKP). Positions 376 to 385 (TGSEKPSSEQ) are enriched in polar residues. The 10 X 10 AA tandem approximate repeats of P-A-K-P-Q-P-Q-Q-P-X stretch occupies residues 397–555 (VGKTPAQQPG…PAKPSAQQST (159 aa)). Pro residues predominate over residues 467–493 (TKPPSQLPGPAKPPPQQPGPAKPPPQQ). Low complexity predominate over residues 494–506 (PGSAKPPSQQPGS). Pro residues predominate over residues 507-522 (TKPPPQQPGPAKPSPQ). Over residues 523-554 (QPGSTKPPSQQPGSAKPSAQQPSPAKPSAQQS) the composition is skewed to low complexity. The C4-type zinc finger occupies 589 to 613 (CPLCNTTELLLHVPEKANFNTCTEC). 2 disordered regions span residues 650–929 (LAPV…TVTG) and 945–1058 (LIST…PEST). The segment covering 673–683 (SKSSPQPQQTS) has biased composition (low complexity). 2 stretches are compositionally biased toward basic and acidic residues: residues 684–702 (PKKDAAPKQDLSKAPEPKK) and 743–755 (EQDKAPVADDKPK). A compositionally biased stretch (polar residues) spans 765 to 774 (DLVSSSSATT). The segment covering 841-857 (KGQKQVDPVQKKEEPKK) has biased composition (basic and acidic residues). Over residues 873 to 882 (KGSPTPPGPR) the composition is skewed to pro residues. Residues 889-927 (VPTPQQSPKPQEQSRRFSLNLGSITDAPKSQPTTPQETV) are compositionally biased toward polar residues. Ser-906 and Ser-918 each carry phosphoserine. Thr-922 is subject to Phosphothreonine. The segment covering 949-969 (AGQPGPHSQSGPGAPMKQAPA) has biased composition (low complexity). Basic and acidic residues-rich tracts occupy residues 996 to 1012 (VKKETKAPAAEKLEPKA) and 1019 to 1034 (KRTETEKKPPPIKDSK). The C4-type zinc finger occupies 1059-1082 (CPLCKTELNIGSKDPPNFNTCTEC). Disordered regions lie at residues 1120 to 1163 (GDIR…QEQE), 1183 to 1386 (EKIP…TDEK), 1391 to 1410 (GLKKDSFSQESSPSSPSDLA), and 1423 to 1868 (QAST…SDPE). Residues 1126 to 1139 (PPAPSGPKASPMPV) are compositionally biased toward pro residues. Composition is skewed to basic and acidic residues over residues 1193 to 1265 (QKQE…HDLL), 1307 to 1318 (PKEDDKTTKTIK), and 1330 to 1347 (DQVEPGKEKTEKEDDKSD). Over residues 1348–1358 (TSSSQQPKSPQ) the composition is skewed to low complexity. A phosphoserine mark is found at Ser-1356, Ser-1366, Ser-1367, Ser-1396, Ser-1398, Ser-1401, Ser-1402, and Ser-1405. The segment covering 1359–1374 (GLSDTGYSSDGISSSL) has biased composition (polar residues). Over residues 1398-1407 (SQESSPSSPS) the composition is skewed to low complexity. Basic and acidic residues-rich tracts occupy residues 1428 to 1451 (ADEKSEKKTQPHEVSPEQPKDQEK) and 1469 to 1510 (KESQ…REPY). 8 positions are modified to phosphoserine: Ser-1516, Ser-1517, Ser-1519, Ser-1522, Ser-1546, Ser-1549, Ser-1570, and Ser-1572. Acidic residues predominate over residues 1564–1576 (SADEDASGSEDDE). The residue at position 1617 (Thr-1617) is a Phosphothreonine. Phosphoserine occurs at positions 1618, 1628, and 1640. The segment covering 1631–1640 (DEDDEAFDES) has biased composition (acidic residues). Basic and acidic residues predominate over residues 1641–1652 (PELKYRETKSQE). Residues 1671–1689 (ELNSTIADKYSAESSQKKT) are compositionally biased toward polar residues. Acidic residues predominate over residues 1693 to 1703 (FDEEPELEMES). Residue Ser-1703 is modified to Phosphoserine. Thr-1705 carries the phosphothreonine modification. 2 positions are modified to phosphoserine: Ser-1707 and Ser-1712. Over residues 1715–1732 (EGSSSLHASSFTPGTSPT) the composition is skewed to polar residues. Residues 1772–1785 (DSSEEEELREEEEL) are compositionally biased toward acidic residues. 2 positions are modified to phosphoserine: Ser-1773 and Ser-1774. Positions 1786–1799 (LKEQEKQREIEQQQ) are enriched in basic and acidic residues. Thr-1825 carries the post-translational modification Phosphothreonine. Phosphoserine is present on Ser-1831. The segment covering 1840–1855 (EELRQAAEMEELHRSS) has biased composition (basic and acidic residues). 4 positions are modified to phosphoserine: Ser-1860, Ser-1865, Ser-1873, and Ser-1894. 3 disordered regions span residues 2169 to 2192 (PSESATSVPPSDTPSLTSSVSSVC), 2365 to 2438 (ETFG…PTIL), and 2504 to 2536 (EPSKPPIAPKPVIPQLPTTTQKPTDIHPKPTGL). 2 stretches are compositionally biased toward low complexity: residues 2174 to 2192 (TSVPPSDTPSLTSSVSSVC) and 2374 to 2387 (SQLPSGSPSVSSLP). Pro residues-rich tracts occupy residues 2404 to 2433 (QPPPPPPPPPPPPPPPPPPPPPPLPPPTSP) and 2506 to 2517 (SKPPIAPKPVIP). At Ser-2562 the chain carries Phosphoserine. Thr-3069 bears the Phosphothreonine mark. Disordered stretches follow at residues 3407 to 3508 (EKQP…DKTK) and 3558 to 3626 (KTYK…LYSP). Basic and acidic residues predominate over residues 3432 to 3441 (DDPRSFKKIV). Ser-3443 carries the post-translational modification Phosphoserine. A phosphothreonine mark is found at Thr-3447 and Thr-3474. Residues 3474–3483 (TDDEDQDEWD) are compositionally biased toward acidic residues. Residues 3574 to 3585 (DTQSPQYLSATS) are compositionally biased toward polar residues. Residues Ser-3577, Ser-3585, Ser-3615, Ser-3619, Ser-3625, Ser-3628, Ser-3631, Ser-3652, Ser-3678, Ser-3680, and Ser-3686 each carry the phosphoserine modification. Disordered regions lie at residues 3652-3746 (SPQK…MGTV) and 3833-3908 (YMSD…QQSH). Composition is skewed to polar residues over residues 3701–3716 (EGYTTKGSQTMTSSGA) and 3733–3745 (STGTQSTFSTMGT). Ser-3835 carries the post-translational modification Phosphoserine. Residues 3845–3857 (TRIESQHGIERPR) are compositionally biased toward basic and acidic residues. A compositionally biased stretch (polar residues) spans 3859 to 3908 (APQTEFSQFIPPQTQTESQLVPPTSPYTQYQYSSPALPTQAPTSYTQQSH). Phosphoserine is present on residues Ser-4088 and Ser-4204. A disordered region spans residues 4278–4301 (EADKPYSSGSRSRPSSRPSSVYGL). Positions 4282-4301 (PYSSGSRSRPSSRPSSVYGL) are enriched in low complexity. 5 positions are modified to phosphoserine: Ser-4358, Ser-4362, Ser-4365, Ser-4394, and Ser-4430. A disordered region spans residues 4389-4411 (RDQFGSSHSLPEVQQHMREESRT). One can recognise a PDZ domain in the interval 4496–4590 (RIKITRDSKD…EAEICVRLDL (95 aa)). Disordered stretches follow at residues 4597–4618 (ENSQHLELHEPPKAVDKAKSPG) and 4645–4690 (EKGS…TKVV). Over residues 4598–4615 (NSQHLELHEPPKAVDKAK) the composition is skewed to basic and acidic residues. Residues 4652–4673 (SGPTSAGSSSVPSPGQPGSPSV) show a composition bias toward low complexity. At Ser-4664 the chain carries Phosphoserine. The 130-residue stretch at 4694-4823 (ITGEIQLQIN…SHLDNTPRWY (130 aa)) folds into the C2 1 domain. Residues Asp-4723 and Asp-4729 each coordinate Ca(2+). Ser-4778 is subject to Phosphoserine. 4 residues coordinate Ca(2+): Asp-4793, Asp-4795, Ser-4798, and Asp-4801. 2 disordered regions span residues 4830–4907 (ESID…VTQT) and 4930–4986 (PTKP…QNGQ). Low complexity-rich tracts occupy residues 4838–4853 (HSSQSSQQSPKPSVIK) and 4877–4887 (SSPGSSKSSSE). The span at 4895–4907 (PSRSQSKTSVTQT) shows a compositional bias: polar residues. The segment covering 4941–4965 (SSVSTGSSGSSFGSGYSVDSEGSSS) has biased composition (low complexity). The C2 2 domain maps to 5007-5132 (VMGEIKIALK…DLRKRIVNWH (126 aa)).

In terms of assembly, interacts with BSN, ERC2/CAST1, RIMS1 and UNC13A. Interacts (via C-terminus) with TRIO (via N-terminus). Interacts with CTBP1. Interacts with SIAH1; this interaction negatively regulates SIAH1 E3 ligase activity. Directly interacts with GIT1 and GIT2. Ca(2+) is required as a cofactor. In terms of tissue distribution, moderately expressed in the developing cerebral cortex.

It is found in the presynaptic active zone. Its function is as follows. Scaffold protein of the presynaptic cytomatrix at the active zone (CAZ) which is the place in the synapse where neurotransmitter is released. After synthesis, participates in the formation of Golgi-derived membranous organelles termed Piccolo-Bassoon transport vesicles (PTVs) that are transported along axons to sites of nascent synaptic contacts. At the presynaptic active zone, regulates the spatial organization of synaptic vesicle cluster, the protein complexes that execute membrane fusion and compensatory endocytosis. Organizes as well the readily releasable pool of synaptic vesicles and safeguards a fraction of them to be not immediately available for action potential-induced release. Also functions in processes other than assembly such as the regulation of specific presynaptic protein ubiquitination by interacting with SIAH1 or the regulation of presynaptic autophagy. Also mediates synapse to nucleus communication leading to reconfiguration of gene expression by associating with the transcriptional corepressor CTBP1 and by subsequently reducing the size of its pool available for nuclear import. The sequence is that of Protein piccolo from Homo sapiens (Human).